The following is a 525-amino-acid chain: Glutamate--cysteine ligase (525 aa).

This sequence belongs to the glutamate--cysteine ligase type 1 family. Type 1 subfamily.

The enzyme catalyses L-cysteine + L-glutamate + ATP = gamma-L-glutamyl-L-cysteine + ADP + phosphate + H(+). Its pathway is sulfur metabolism; glutathione biosynthesis; glutathione from L-cysteine and L-glutamate: step 1/2. This is Glutamate--cysteine ligase from Alcanivorax borkumensis (strain ATCC 700651 / DSM 11573 / NCIMB 13689 / SK2).